The sequence spans 184 residues: GTP cyclohydrolase 1 (184 aa).

Residues cysteine 75, histidine 78, and cysteine 146 each coordinate Zn(2+).

It belongs to the GTP cyclohydrolase I family. In terms of assembly, toroid-shaped homodecamer, composed of two pentamers of five dimers.

The catalysed reaction is GTP + H2O = 7,8-dihydroneopterin 3'-triphosphate + formate + H(+). Its pathway is cofactor biosynthesis; 7,8-dihydroneopterin triphosphate biosynthesis; 7,8-dihydroneopterin triphosphate from GTP: step 1/1. The polypeptide is GTP cyclohydrolase 1 (Pseudoalteromonas translucida (strain TAC 125)).